Consider the following 277-residue polypeptide: Undecaprenyl-diphosphatase (277 aa).

The next 7 helical transmembrane spans lie at 1–21 (MTWI…FLPI), 41–61 (GAAF…IYFW), 90–110 (WLII…EDWI), 114–134 (FRSL…LALA), 191–211 (AFLL…YTSL), 224–244 (ETLV…AWLM), and 255–275 (FVWY…AGVI).

This sequence belongs to the UppP family.

Its subcellular location is the cell membrane. It carries out the reaction di-trans,octa-cis-undecaprenyl diphosphate + H2O = di-trans,octa-cis-undecaprenyl phosphate + phosphate + H(+). In terms of biological role, catalyzes the dephosphorylation of undecaprenyl diphosphate (UPP). Confers resistance to bacitracin. The polypeptide is Undecaprenyl-diphosphatase (Micrococcus luteus (strain ATCC 4698 / DSM 20030 / JCM 1464 / CCM 169 / CCUG 5858 / IAM 1056 / NBRC 3333 / NCIMB 9278 / NCTC 2665 / VKM Ac-2230) (Micrococcus lysodeikticus)).